Consider the following 229-residue polypeptide: Large ribosomal subunit protein uL1 (229 aa).

The protein belongs to the universal ribosomal protein uL1 family. Part of the 50S ribosomal subunit.

Functionally, binds directly to 23S rRNA. The L1 stalk is quite mobile in the ribosome, and is involved in E site tRNA release. Protein L1 is also a translational repressor protein, it controls the translation of the L11 operon by binding to its mRNA. The chain is Large ribosomal subunit protein uL1 from Streptococcus equi subsp. zooepidemicus (strain MGCS10565).